Reading from the N-terminus, the 194-residue chain is ATP-dependent Clp protease proteolytic subunit (194 aa).

S98 functions as the Nucleophile in the catalytic mechanism. H123 is an active-site residue.

This sequence belongs to the peptidase S14 family. As to quaternary structure, fourteen ClpP subunits assemble into 2 heptameric rings which stack back to back to give a disk-like structure with a central cavity, resembling the structure of eukaryotic proteasomes.

The protein resides in the cytoplasm. The enzyme catalyses Hydrolysis of proteins to small peptides in the presence of ATP and magnesium. alpha-casein is the usual test substrate. In the absence of ATP, only oligopeptides shorter than five residues are hydrolyzed (such as succinyl-Leu-Tyr-|-NHMec, and Leu-Tyr-Leu-|-Tyr-Trp, in which cleavage of the -Tyr-|-Leu- and -Tyr-|-Trp bonds also occurs).. Functionally, cleaves peptides in various proteins in a process that requires ATP hydrolysis. Has a chymotrypsin-like activity. Plays a major role in the degradation of misfolded proteins. This Alkaliphilus metalliredigens (strain QYMF) protein is ATP-dependent Clp protease proteolytic subunit.